The primary structure comprises 246 residues: Hydroxyacylglutathione hydrolase (246 aa).

Zn(2+)-binding residues include H58, H60, D62, H63, H117, D137, and H175.

It belongs to the metallo-beta-lactamase superfamily. Glyoxalase II family. In terms of assembly, monomer. Zn(2+) serves as cofactor.

The enzyme catalyses an S-(2-hydroxyacyl)glutathione + H2O = a 2-hydroxy carboxylate + glutathione + H(+). It participates in secondary metabolite metabolism; methylglyoxal degradation; (R)-lactate from methylglyoxal: step 2/2. Thiolesterase that catalyzes the hydrolysis of S-D-lactoyl-glutathione to form glutathione and D-lactic acid. The sequence is that of Hydroxyacylglutathione hydrolase from Prochlorococcus marinus (strain MIT 9312).